The primary structure comprises 272 residues: Short-chain dehydrogenase reductase ATA1 (272 aa).

14-38 contributes to the NADP(+) binding site; sequence IITGGARGIGAATARLFTENGAYVI. Position 143 (serine 143) interacts with substrate. Tyrosine 156 functions as the Proton acceptor in the catalytic mechanism. An NADP(+)-binding site is contributed by lysine 160.

The protein belongs to the short-chain dehydrogenases/reductases (SDR) family. Expressed specifically in tapetal cells.

Its function is as follows. May play a role in tapetum development. The chain is Short-chain dehydrogenase reductase ATA1 from Arabidopsis thaliana (Mouse-ear cress).